A 781-amino-acid chain; its full sequence is Homeobox protein SIX4 (781 aa).

Positions 1-10 (MSSSSPTGQI) are enriched in polar residues. 2 disordered regions span residues 1–55 (MSSS…PLEP) and 270–321 (WFKN…GITN). Position 2 is an N-acetylserine (Ser2). Positions 223 to 282 (GEETVYCFKEKSRNALKELYKQNRYPSPAEKRHLAKITGLSLTQVSNWFKNRRQRDRNPS) form a DNA-binding region, homeobox. Basic and acidic residues-rich tracts occupy residues 278–290 (DRNP…KSES) and 299–308 (ESSKGHEDLS). A Phosphoserine modification is found at Ser640.

Belongs to the SIX/Sine oculis homeobox family. In terms of assembly, interacts with EYA3; acts cooperatively with EYA3 to transactivate target genes through interaction and nuclear translocation of EYA3 protein.

The protein localises to the nucleus. Its subcellular location is the cytoplasm. Functionally, transcriptional regulator which can act as both a transcriptional repressor and activator by binding a DNA sequence on these target genes and is involved in processes like cell differentiation, cell migration and cell survival. Transactivates gene expression by binding a 5'-[CAT]A[CT][CT][CTG]GA[GAT]-3' motif present in the Trex site and a 5'-TCA[AG][AG]TTNC-3' motif present in the MEF3 site of the muscle-specific genes enhancer. Acts cooperatively with EYA proteins to transactivate their target genes through interaction and nuclear translocation of EYA protein. Acts synergistically with SIX1 to regulate target genes involved in formation of various organs, including muscle, kidney, gonad, ganglia, olfactory epithelium and cranial skeleton. Plays a role in several important steps of muscle development. Controls the genesis of hypaxial myogenic progenitors in the dermomyotome by transactivating PAX3 and the delamination and migration of the hypaxial precursors from the ventral lip to the limb buds through the transactivation of PAX3, MET and LBX1. Controls myoblast determination by transactivating MYF5, MYOD1 and MYF6. Controls somitic differentiation in myocyte through MYOG transactivation. Plays a role in synaptogenesis and sarcomere organization by participating in myofiber specialization during embryogenesis by activating fast muscle program in the primary myotome resulting in an up-regulation of fast muscle genes, including ATP2A1, MYL1 and TNNT3. Simultaneously, is also able to activate inhibitors of slow muscle genes, such as SOX6, HRASLS, and HDAC4, thereby restricting the activation of the slow muscle genes. During muscle regeneration, negatively regulates differentiation of muscle satellite cells through down-regulation of MYOG expression. During kidney development regulates the early stages of metanephros development and ureteric bud formation through regulation of GDNF, SALL1, PAX8 and PAX2 expression. Plays a role in gonad development by regulating both testis determination and size determination. In gonadal sex determination, transactivates ZFPM2 by binding a MEF3 consensus sequence, resulting in SRY up-regulation. In gonadal size determination, transactivates NR5A1 by binding a MEF3 consensus sequence resulting in gonadal precursor cell formation regulation. During olfactory development mediates the specification and patterning of olfactory placode through fibroblast growth factor and BMP4 signaling pathways and also regulates epithelial cell proliferation during placode formation. Promotes survival of sensory neurons during early trigeminal gangliogenesis. In the developing dorsal root ganglia, up-regulates SLC12A2 transcription. Regulates early thymus/parathyroid organogenesis through regulation of GCM2 and FOXN1 expression. Forms gustatory papillae during development of the tongue. Also plays a role during embryonic cranial skeleton morphogenesis. This Homo sapiens (Human) protein is Homeobox protein SIX4 (SIX4).